Consider the following 516-residue polypeptide: Putative protein NRT1/ PTR FAMILY 2.2 (516 aa).

Transmembrane regions (helical) follow at residues 31-51 (TLLG…VFLI), 67-87 (IVNG…DSFF), 90-110 (IPVI…LTMI), 138-158 (ILYI…FTLA), 174-194 (FFNW…TAIV), 201-221 (SWKL…IVFV), 320-340 (LLLA…LIIL), 362-382 (VIVI…VYPM), 394-414 (LQKV…SAIV), 437-457 (FIAS…ITLI), and 476-496 (VYWL…AWFY).

Belongs to the major facilitator superfamily. Proton-dependent oligopeptide transporter (POT/PTR) (TC 2.A.17) family. Not detected.

The protein localises to the membrane. In terms of biological role, transporter involved in a passive nitrate efflux. This is Putative protein NRT1/ PTR FAMILY 2.2 (NPF2.2) from Arabidopsis thaliana (Mouse-ear cress).